The following is a 62-amino-acid chain: Conotoxin Im11.9 (62 aa).

The N-terminal stretch at 1-22 (MFRVTSVLLVIVLLNLVVLTNA) is a signal peptide. 4 disulfides stabilise this stretch: Cys-23–Cys-33, Cys-27–Cys-38, Cys-32–Cys-41, and Cys-37–Cys-46. Positions 23-49 (CHMDCSKMTCCSGICCFYCGRPMCPGT) are excised as a propeptide.

Belongs to the conotoxin I2 superfamily. As to expression, expressed by the venom duct.

It is found in the secreted. In terms of biological role, probable neurotoxin. In Conus imperialis (Imperial cone), this protein is Conotoxin Im11.9.